Consider the following 270-residue polypeptide: Acyl-[acyl-carrier-protein]--UDP-N-acetylglucosamine O-acyltransferase (270 aa).

It belongs to the transferase hexapeptide repeat family. LpxA subfamily. In terms of assembly, homotrimer.

The protein resides in the cytoplasm. The catalysed reaction is a (3R)-hydroxyacyl-[ACP] + UDP-N-acetyl-alpha-D-glucosamine = a UDP-3-O-[(3R)-3-hydroxyacyl]-N-acetyl-alpha-D-glucosamine + holo-[ACP]. Its pathway is glycolipid biosynthesis; lipid IV(A) biosynthesis; lipid IV(A) from (3R)-3-hydroxytetradecanoyl-[acyl-carrier-protein] and UDP-N-acetyl-alpha-D-glucosamine: step 1/6. In terms of biological role, involved in the biosynthesis of lipid A, a phosphorylated glycolipid that anchors the lipopolysaccharide to the outer membrane of the cell. In Helicobacter pylori (strain P12), this protein is Acyl-[acyl-carrier-protein]--UDP-N-acetylglucosamine O-acyltransferase.